The sequence spans 382 residues: 1-deoxy-D-xylulose 5-phosphate reductoisomerase (382 aa).

NADPH contacts are provided by threonine 10, glycine 11, serine 12, isoleucine 13, glycine 36, lysine 37, asparagine 38, and asparagine 121. Residue lysine 122 participates in 1-deoxy-D-xylulose 5-phosphate binding. Glutamate 123 provides a ligand contact to NADPH. Aspartate 147 lines the Mn(2+) pocket. The 1-deoxy-D-xylulose 5-phosphate site is built by serine 148, glutamate 149, serine 173, and histidine 196. Residue glutamate 149 coordinates Mn(2+). Position 202 (glycine 202) interacts with NADPH. Positions 209, 214, 215, and 218 each coordinate 1-deoxy-D-xylulose 5-phosphate. Mn(2+) is bound at residue glutamate 218.

The protein belongs to the DXR family. Requires Mg(2+) as cofactor. Mn(2+) serves as cofactor.

The enzyme catalyses 2-C-methyl-D-erythritol 4-phosphate + NADP(+) = 1-deoxy-D-xylulose 5-phosphate + NADPH + H(+). The protein operates within isoprenoid biosynthesis; isopentenyl diphosphate biosynthesis via DXP pathway; isopentenyl diphosphate from 1-deoxy-D-xylulose 5-phosphate: step 1/6. In terms of biological role, catalyzes the NADPH-dependent rearrangement and reduction of 1-deoxy-D-xylulose-5-phosphate (DXP) to 2-C-methyl-D-erythritol 4-phosphate (MEP). The polypeptide is 1-deoxy-D-xylulose 5-phosphate reductoisomerase (Halalkalibacterium halodurans (strain ATCC BAA-125 / DSM 18197 / FERM 7344 / JCM 9153 / C-125) (Bacillus halodurans)).